A 209-amino-acid chain; its full sequence is Ribosomal RNA large subunit methyltransferase E (209 aa).

Positions 63, 65, 83, 99, and 124 each coordinate S-adenosyl-L-methionine. The Proton acceptor role is filled by K164.

This sequence belongs to the class I-like SAM-binding methyltransferase superfamily. RNA methyltransferase RlmE family.

Its subcellular location is the cytoplasm. It carries out the reaction uridine(2552) in 23S rRNA + S-adenosyl-L-methionine = 2'-O-methyluridine(2552) in 23S rRNA + S-adenosyl-L-homocysteine + H(+). Its function is as follows. Specifically methylates the uridine in position 2552 of 23S rRNA at the 2'-O position of the ribose in the fully assembled 50S ribosomal subunit. The sequence is that of Ribosomal RNA large subunit methyltransferase E from Shewanella woodyi (strain ATCC 51908 / MS32).